The primary structure comprises 338 residues: Lipoate-protein ligase A (338 aa).

The region spanning 29-216 (PATQRVLFLW…AFFAHYGERV (188 aa)) is the BPL/LPL catalytic domain. ATP is bound by residues arginine 71, 76–79 (GAVF), and lysine 134. Lysine 134 is a binding site for (R)-lipoate.

It belongs to the LplA family. As to quaternary structure, monomer.

It localises to the cytoplasm. The enzyme catalyses L-lysyl-[lipoyl-carrier protein] + (R)-lipoate + ATP = N(6)-[(R)-lipoyl]-L-lysyl-[lipoyl-carrier protein] + AMP + diphosphate + H(+). It participates in protein modification; protein lipoylation via exogenous pathway; protein N(6)-(lipoyl)lysine from lipoate: step 1/2. The protein operates within protein modification; protein lipoylation via exogenous pathway; protein N(6)-(lipoyl)lysine from lipoate: step 2/2. Catalyzes both the ATP-dependent activation of exogenously supplied lipoate to lipoyl-AMP and the transfer of the activated lipoyl onto the lipoyl domains of lipoate-dependent enzymes. The protein is Lipoate-protein ligase A of Escherichia coli O9:H4 (strain HS).